The primary structure comprises 288 residues: Urease accessory protein UreD (288 aa).

It belongs to the UreD family. In terms of assembly, ureD, UreF and UreG form a complex that acts as a GTP-hydrolysis-dependent molecular chaperone, activating the urease apoprotein by helping to assemble the nickel containing metallocenter of UreC. The UreE protein probably delivers the nickel.

The protein localises to the cytoplasm. Functionally, required for maturation of urease via the functional incorporation of the urease nickel metallocenter. In Dechloromonas aromatica (strain RCB), this protein is Urease accessory protein UreD.